Here is a 267-residue protein sequence, read N- to C-terminus: Interleukin-1 beta (267 aa).

A propeptide spanning residues 1-115 (MAPVPELTSE…DTWDDGFVCD (115 aa)) is cleaved from the precursor.

The protein belongs to the IL-1 family. In terms of assembly, monomer. In its precursor form, weakly interacts with full-length MEFV; the mature cytokine does not interact at all. Interacts with integrins ITGAV:ITGBV and ITGA5:ITGB1; integrin-binding is required for IL1B signaling. Interacts with cargo receptor TMED10; the interaction is direct and is required for the secretion of IL1B mature form. Interacts with HSP90AB1; the interaction facilitates cargo translocation into the ERGIC. Interacts with HSP90B1; the interaction facilitates cargo translocation into the ERGIC.

It localises to the cytoplasm. The protein resides in the cytosol. Its subcellular location is the secreted. The protein localises to the lysosome. It is found in the extracellular exosome. In terms of biological role, potent pro-inflammatory cytokine. Initially discovered as the major endogenous pyrogen, induces prostaglandin synthesis, neutrophil influx and activation, T-cell activation and cytokine production, B-cell activation and antibody production, and fibroblast proliferation and collagen production. Promotes Th17 differentiation of T-cells. Synergizes with IL12/interleukin-12 to induce IFNG synthesis from T-helper 1 (Th1) cells. Plays a role in angiogenesis by inducing VEGF production synergistically with TNF and IL6. Involved in transduction of inflammation downstream of pyroptosis: its mature form is specifically released in the extracellular milieu by passing through the gasdermin-D (GSDMD) pore. In Felis catus (Cat), this protein is Interleukin-1 beta (IL1B).